The chain runs to 466 residues: MAVLSVLLPITFLLSSVTGTPVTSPRQQSCNTVDEGYQCFSGVSHLWGQYSPYFSVDDESSLSEDVPDHCQVTFAQVLSRHGARYPTKSKSEKYAKLIKAVQHNATSFSGKYAFLKSYNYSLGADDLTPFGENQLVDSGIKFYQRYEELAKNVVPFIRASGSDRVIASGEKFIEGFQKAKLGDSKSKRGQPAPIVNVVITETEGFNNTLDHSLCTAFENSTTGDDAEDKFTAVFTPSIVERLEKDLPGTTLSSKEVVYLMDMCSFDTIALTRDGSRLSPFCALFTQEEWAQYDYLQSVSKYYGYGGGNPLGPAQGIGFANELIARLTKSPVKDHTTTNTTLDSNPATFPLNATLYADFSHDNTMTSVFFALGLYNTTEPLSQTSVQSTEETNGYSSARTVPFGARAYVEMMQCTDEKEPLVRVLVNDRVIPLQGCDADEYGRCKRDDFVEGLSFVTSGGNWGECFA.

An N-terminal signal peptide occupies residues 1–19 (MAVLSVLLPITFLLSSVTG). A disulfide bridge connects residues Cys-30 and Cys-39. Residues Gln-49, Tyr-50, Arg-80, His-81, Arg-84, and Thr-87 each contribute to the 1D-myo-inositol hexakisphosphate site. Cystine bridges form between Cys-70-Cys-413, Cys-214-Cys-464, Cys-263-Cys-281, and Cys-435-Cys-443. The active-site Nucleophile is His-81. 2 N-linked (GlcNAc...) asparagine glycosylation sites follow: Asn-104 and Asn-119. Arg-164 contacts 1D-myo-inositol hexakisphosphate. Residues Asn-206 and Asn-219 are each glycosylated (N-linked (GlcNAc...) asparagine). Lys-300 contributes to the 1D-myo-inositol hexakisphosphate binding site. N-linked (GlcNAc...) asparagine glycans are attached at residues Asn-338 and Asn-351. Residues His-360 and Asp-361 each contribute to the 1D-myo-inositol hexakisphosphate site. Asn-375 carries N-linked (GlcNAc...) asparagine glycosylation.

The protein belongs to the histidine acid phosphatase family. In terms of assembly, monomer.

It localises to the secreted. It carries out the reaction 1D-myo-inositol hexakisphosphate + H2O = 1D-myo-inositol 1,2,4,5,6-pentakisphosphate + phosphate. The catalysed reaction is 1D-myo-inositol 1,2,4,5,6-pentakisphosphate + H2O = 1D-myo-inositol 1,2,5,6-tetrakisphosphate + phosphate. The enzyme catalyses 1D-myo-inositol 1,2,5,6-tetrakisphosphate + H2O = 1D-myo-inositol 1,2,6-trisphosphate + phosphate. It catalyses the reaction 1D-myo-inositol 1,2,6-trisphosphate + H2O = 1D-myo-inositol 1,2-bisphosphate + phosphate. It carries out the reaction 1D-myo-inositol 1,2-bisphosphate + H2O = 1D-myo-inositol 2-phosphate + phosphate. Catalyzes the phosphate monoester hydrolysis of phytic acid (myo-inositol hexakisphosphate), which results in the stepwise formation of myo-inositol pentakis-, tetrakis-, tris-, bis-, and monophosphates, as well as the liberation of inorganic phosphate. Myo-inositol 2-monophosphate is the end product. The protein is Phytase A (phyA) of Aspergillus oryzae (strain ATCC 42149 / RIB 40) (Yellow koji mold).